A 400-amino-acid polypeptide reads, in one-letter code: Lysophospholipid transporter LplT (400 aa).

12 consecutive transmembrane segments (helical) span residues 19–39 (VIVA…ATLA), 53–73 (VLQM…GQIA), 91–111 (AGAA…LVGI), 139–159 (LMEA…GVLA), 164–184 (IAAL…NLFI), 195–213 (SWRL…VVLW), 227–247 (LFWG…PVAL), 257–277 (YLNA…AKLV), 281–301 (TVSR…IFSL), 304–324 (ALLP…FFVV), 352–372 (NSAM…GVPA), and 373–393 (VAIG…LWIW).

Belongs to the major facilitator superfamily. LplT (TC 2.A.1.42) family.

It is found in the cell inner membrane. Its function is as follows. Catalyzes the facilitated diffusion of 2-acyl-glycero-3-phosphoethanolamine (2-acyl-GPE) into the cell. This is Lysophospholipid transporter LplT from Salmonella agona (strain SL483).